A 130-amino-acid chain; its full sequence is Dihydroneopterin aldolase (130 aa).

Substrate contacts are provided by residues Glu22, Tyr54, and Ile73 to Glu74. Residue Lys100 is the Proton donor/acceptor of the active site.

It belongs to the DHNA family.

It catalyses the reaction 7,8-dihydroneopterin = 6-hydroxymethyl-7,8-dihydropterin + glycolaldehyde. Its pathway is cofactor biosynthesis; tetrahydrofolate biosynthesis; 2-amino-4-hydroxy-6-hydroxymethyl-7,8-dihydropteridine diphosphate from 7,8-dihydroneopterin triphosphate: step 3/4. Catalyzes the conversion of 7,8-dihydroneopterin to 6-hydroxymethyl-7,8-dihydropterin. In Methylorubrum extorquens (strain ATCC 14718 / DSM 1338 / JCM 2805 / NCIMB 9133 / AM1) (Methylobacterium extorquens), this protein is Dihydroneopterin aldolase (folB).